The sequence spans 96 residues: Protein Vpr (96 aa).

Positions 1 to 42 (MEQAPEDQGPQREPYNDWTLELLEELKNEAVRHFPRIWLHSL) are homooligomerization. Residues serine 79, serine 94, and serine 96 each carry the phosphoserine; by host modification.

This sequence belongs to the HIV-1 VPR protein family. In terms of assembly, homooligomer, may form homodimer. Interacts with p6-gag region of the Pr55 Gag precursor protein through a (Leu-X-X)4 motif near the C-terminus of the P6gag protein. Interacts with host UNG. May interact with host RAD23A/HHR23A. Interacts with host VPRBP/DCAF1, leading to hijack the CUL4A-RBX1-DDB1-DCAF1/VPRBP complex, mediating ubiquitination of host proteins such as TERT and ZGPAT and arrest of the cell cycle in G2 phase. Post-translationally, phosphorylated on several residues by host. These phosphorylations regulate VPR activity for the nuclear import of the HIV-1 pre-integration complex.

It localises to the virion. Its subcellular location is the host nucleus. The protein localises to the host extracellular space. During virus replication, may deplete host UNG protein, and incude G2-M cell cycle arrest. Acts by targeting specific host proteins for degradation by the 26S proteasome, through association with the cellular CUL4A-DDB1 E3 ligase complex by direct interaction with host VPRPB/DCAF-1. Cell cycle arrest reportedly occurs within hours of infection and is not blocked by antiviral agents, suggesting that it is initiated by the VPR carried into the virion. Additionally, VPR induces apoptosis in a cell cycle dependent manner suggesting that these two effects are mechanistically linked. Detected in the serum and cerebrospinal fluid of AIDS patient, VPR may also induce cell death to bystander cells. In terms of biological role, during virus entry, plays a role in the transport of the viral pre-integration (PIC) complex to the host nucleus. This function is crucial for viral infection of non-dividing macrophages. May act directly at the nuclear pore complex, by binding nucleoporins phenylalanine-glycine (FG)-repeat regions. The polypeptide is Protein Vpr (Human immunodeficiency virus type 1 group M subtype B (strain 89.6) (HIV-1)).